A 94-amino-acid chain; its full sequence is Integration host factor subunit beta (94 aa).

The protein belongs to the bacterial histone-like protein family. In terms of assembly, heterodimer of an alpha and a beta chain.

Its function is as follows. This protein is one of the two subunits of integration host factor, a specific DNA-binding protein that functions in genetic recombination as well as in transcriptional and translational control. The protein is Integration host factor subunit beta of Brucella melitensis biotype 2 (strain ATCC 23457).